Reading from the N-terminus, the 103-residue chain is Small ribosomal subunit protein uS10 (103 aa).

This sequence belongs to the universal ribosomal protein uS10 family. As to quaternary structure, part of the 30S ribosomal subunit.

Its function is as follows. Involved in the binding of tRNA to the ribosomes. This chain is Small ribosomal subunit protein uS10, found in Chlorobaculum parvum (strain DSM 263 / NCIMB 8327) (Chlorobium vibrioforme subsp. thiosulfatophilum).